We begin with the raw amino-acid sequence, 68 residues long: Alpha-conotoxin PIVA (68 aa).

Positions 1 to 16 are cleaved as a signal peptide; the sequence is MFTVFLLVVLATTVVS. Positions 17–41 are excised as a propeptide; sequence FTSDRASDDRNTNDKASRLLSHVVR. 3 disulfides stabilise this stretch: C43-C57, C44-C52, and C55-C64. 4-hydroxyproline; partial is present on residues P48 and P54. P61 bears the 4-hydroxyproline mark. The residue at position 66 (Q66) is a Glutamine amide.

Belongs to the conotoxin A superfamily. Expressed by the venom duct.

Its subcellular location is the secreted. Alpha-conotoxins act on postsynaptic membranes, they bind to the nicotinic acetylcholine receptors (nAChR) and thus inhibit them. This toxin has higher affinity for the adult subtype (alpha-1-beta-1-gamma-delta (CHRNA1-CHRNB1-CHRNG-CHRND) subunits) (IC(50)=2.3 nM) of the receptor than for the fetal subtype (alpha-1-beta-1-epsilon-delta (CHRNA1-CHRNB1-CHRND-CHRNE) subunits) (IC(50)=22 nM). This Conus purpurascens (Purple cone) protein is Alpha-conotoxin PIVA.